The following is a 563-amino-acid chain: Delta-1-pyrroline-5-carboxylate dehydrogenase, mitochondrial (563 aa).

Residues 1–24 (MLLPAPALRRALLSRPWTGAGLRW) constitute a mitochondrion transit peptide. The residue at position 31 (K31) is an N6-succinyllysine. A Phosphoserine modification is found at S44. An N6-acetyllysine modification is found at K52. N6-acetyllysine; alternate is present on residues K93, K99, K114, K130, and K175. N6-succinyllysine; alternate occurs at positions 93, 99, 114, 130, and 175. NAD(+) contacts are provided by residues S208, K233, and 286 to 290 (GSVPT). E314 (proton acceptor) is an active-site residue. At K318 the chain carries N6-acetyllysine. K347 is modified (N6-succinyllysine). The active-site Nucleophile is the C348. N6-acetyllysine occurs at positions 365 and 376. An N6-succinyllysine modification is found at K395. NAD(+) is bound at residue E447. An N6-acetyllysine modification is found at K462. An N6-acetyllysine; alternate modification is found at K509. K509 is modified (N6-succinyllysine; alternate). S513 serves as a coordination point for substrate. N6-acetyllysine occurs at positions 531 and 552.

The protein belongs to the aldehyde dehydrogenase family. Homodimer. In terms of tissue distribution, highest expression is found in liver followed by skeletal muscle, kidney, heart, brain, placenta, lung and pancreas.

The protein localises to the mitochondrion matrix. The catalysed reaction is L-glutamate 5-semialdehyde + NAD(+) + H2O = L-glutamate + NADH + 2 H(+). Its pathway is amino-acid degradation; L-proline degradation into L-glutamate; L-glutamate from L-proline: step 2/2. Irreversible conversion of delta-1-pyrroline-5-carboxylate (P5C), derived either from proline or ornithine, to glutamate. This is a necessary step in the pathway interconnecting the urea and tricarboxylic acid cycles. The preferred substrate is glutamic gamma-semialdehyde, other substrates include succinic, glutaric and adipic semialdehydes. This chain is Delta-1-pyrroline-5-carboxylate dehydrogenase, mitochondrial (ALDH4A1), found in Homo sapiens (Human).